Here is a 186-residue protein sequence, read N- to C-terminus: Threonylcarbamoyl-AMP synthase (186 aa).

The YrdC-like domain maps to 5–186 (TQSINDAVKC…DAITGEILRL (182 aa)).

It belongs to the SUA5 family. TsaC subfamily.

It is found in the cytoplasm. It catalyses the reaction L-threonine + hydrogencarbonate + ATP = L-threonylcarbamoyladenylate + diphosphate + H2O. In terms of biological role, required for the formation of a threonylcarbamoyl group on adenosine at position 37 (t(6)A37) in tRNAs that read codons beginning with adenine. Catalyzes the conversion of L-threonine, HCO(3)(-)/CO(2) and ATP to give threonylcarbamoyl-AMP (TC-AMP) as the acyladenylate intermediate, with the release of diphosphate. In Coxiella burnetii (strain RSA 493 / Nine Mile phase I), this protein is Threonylcarbamoyl-AMP synthase.